The chain runs to 763 residues: Phosphoglycerol transferase I (763 aa).

4 helical membrane passes run 1-21, 26-46, 77-97, and 108-128; these read MSEL…AWKA, WWFA…ITLF, ILPG…LGWI, and FGYS…SPAF.

This sequence belongs to the OpgB family.

The protein localises to the cell inner membrane. The enzyme catalyses a phosphatidylglycerol + a membrane-derived-oligosaccharide D-glucose = a 1,2-diacyl-sn-glycerol + a membrane-derived-oligosaccharide 6-(glycerophospho)-D-glucose.. It functions in the pathway glycan metabolism; osmoregulated periplasmic glucan (OPG) biosynthesis. Functionally, transfers a phosphoglycerol residue from phosphatidylglycerol to the membrane-bound nascent glucan backbones. In Escherichia coli (strain SE11), this protein is Phosphoglycerol transferase I.